The chain runs to 200 residues: Recombination protein RecR (200 aa).

The segment at 58–75 (CPTCFCLKSHPESVCSFC) adopts a C4-type zinc-finger fold. In terms of domain architecture, Toprim spans 82 to 177 (SILCIVATPK…SVSRLALGLP (96 aa)).

This sequence belongs to the RecR family.

Functionally, may play a role in DNA repair. It seems to be involved in an RecBC-independent recombinational process of DNA repair. It may act with RecF and RecO. The protein is Recombination protein RecR of Chlamydia abortus (strain DSM 27085 / S26/3) (Chlamydophila abortus).